A 185-amino-acid polypeptide reads, in one-letter code: Ribosome-recycling factor (185 aa).

The protein belongs to the RRF family.

The protein resides in the cytoplasm. Its function is as follows. Responsible for the release of ribosomes from messenger RNA at the termination of protein biosynthesis. May increase the efficiency of translation by recycling ribosomes from one round of translation to another. In Streptococcus gordonii (strain Challis / ATCC 35105 / BCRC 15272 / CH1 / DL1 / V288), this protein is Ribosome-recycling factor.